The primary structure comprises 320 residues: Aldose reductase (320 aa).

The active-site Proton donor is the Tyr-60. Residue His-121 participates in substrate binding. An NADP(+)-binding site is contributed by Ser-215–Asn-269.

The protein belongs to the aldo/keto reductase family.

The catalysed reaction is an alditol + NAD(+) = an aldose + NADH + H(+). The enzyme catalyses an alditol + NADP(+) = an aldose + NADPH + H(+). In Hordeum vulgare (Barley), this protein is Aldose reductase.